A 430-amino-acid polypeptide reads, in one-letter code: Histidine--tRNA ligase (430 aa).

Belongs to the class-II aminoacyl-tRNA synthetase family. Homodimer.

The protein resides in the cytoplasm. The enzyme catalyses tRNA(His) + L-histidine + ATP = L-histidyl-tRNA(His) + AMP + diphosphate + H(+). The polypeptide is Histidine--tRNA ligase (Chlamydia felis (strain Fe/C-56) (Chlamydophila felis)).